The primary structure comprises 170 residues: Phosphothreonine lyase OspF (170 aa).

The active-site Proton donor is the H82. K112 (proton acceptor) is an active-site residue.

It belongs to the phosphothreonine lyase family.

Its subcellular location is the secreted. In terms of biological role, catalyzes the removal of the phosphate group from the phosphothreonine in the mitogen-activated protein kinases such as MAPK2/ERK2, MAPK3/ERK1, MAPK8 and MAPK14 in an irreversible reaction, thus preventing the downstream phosphorylation of histone H3. This epigenetic modification results in inhibition of the transcription of a specific subset of pro-inflammatory genes, and ultimately to a reduced immune response against the invading pathogen. The diminished immune response enhances the bacterium's ability to disseminate and multiply within the host. The sequence is that of Phosphothreonine lyase OspF (ospF) from Shigella boydii.